A 172-amino-acid polypeptide reads, in one-letter code: Zinc finger protein 580 (172 aa).

The disordered stretch occupies residues 1-93 (MLLLPPRPPH…GEPGPRKGYS (93 aa)). Residues 19–30 (MDPPPPKAPPFP) show a composition bias toward pro residues. Residue Lys-31 forms a Glycyl lysine isopeptide (Lys-Gly) (interchain with G-Cter in SUMO2) linkage. A compositionally biased stretch (low complexity) spans 31-44 (KAEGPSSTPSSAAG). Over residues 75–86 (GPPQREAPPGEP) the composition is skewed to pro residues. Residues 92–114 (YSCPECARVFASPLRLQSHRVSH) form a C2H2-type 1 zinc finger. Residue Lys-118 forms a Glycyl lysine isopeptide (Lys-Gly) (interchain with G-Cter in SUMO2) linkage. C2H2-type zinc fingers lie at residues 120-142 (FTCG…RATH) and 150-172 (HTCP…VRLH).

As to quaternary structure, interacts with SMAD2. In terms of tissue distribution, expressed in endothelial cells.

It localises to the nucleus. Involved in the regulation of endothelial cell proliferation and migration. Mediates H(2)O(2)-induced leukocyte chemotaxis by elevating interleukin-8 production and may play a role in inflammation. May be involved in transcriptional regulation. In Homo sapiens (Human), this protein is Zinc finger protein 580 (ZNF580).